A 165-amino-acid polypeptide reads, in one-letter code: Xanthine-guanine phosphoribosyltransferase (165 aa).

5-phospho-alpha-D-ribose 1-diphosphate contacts are provided by residues 41–42 and 98–106; these read RG and DDLTDTGKT. Asp99 contacts Mg(2+). Guanine contacts are provided by Asp102 and Ile145. The xanthine site is built by Asp102 and Ile145. GMP contacts are provided by residues 102-106 and 144-145; these read DTGKT and WI.

Belongs to the purine/pyrimidine phosphoribosyltransferase family. XGPT subfamily. As to quaternary structure, homotetramer. It depends on Mg(2+) as a cofactor.

It localises to the cell inner membrane. The catalysed reaction is GMP + diphosphate = guanine + 5-phospho-alpha-D-ribose 1-diphosphate. The enzyme catalyses XMP + diphosphate = xanthine + 5-phospho-alpha-D-ribose 1-diphosphate. It catalyses the reaction IMP + diphosphate = hypoxanthine + 5-phospho-alpha-D-ribose 1-diphosphate. It participates in purine metabolism; GMP biosynthesis via salvage pathway; GMP from guanine: step 1/1. The protein operates within purine metabolism; XMP biosynthesis via salvage pathway; XMP from xanthine: step 1/1. In terms of biological role, purine salvage pathway enzyme that catalyzes the transfer of the ribosyl-5-phosphate group from 5-phospho-alpha-D-ribose 1-diphosphate (PRPP) to the N9 position of the 6-oxopurines guanine and xanthine to form the corresponding ribonucleotides GMP (guanosine 5'-monophosphate) and XMP (xanthosine 5'-monophosphate), with the release of PPi. To a lesser extent, also acts on hypoxanthine. The polypeptide is Xanthine-guanine phosphoribosyltransferase (Sinorhizobium medicae (strain WSM419) (Ensifer medicae)).